The chain runs to 1026 residues: mRNA transport homolog 4 (1026 aa).

In terms of domain architecture, Helicase ATP-binding spans 134-290 (ILCIDNNQSV…WVASIKQQPV (157 aa)). 147–154 (AHTSAGKT) is an ATP binding site. Residues 238–241 (DEIH) carry the DEIH box motif. The Helicase C-terminal domain maps to 360–564 (NVLKIIRSVA…NMVLNLMRVE (205 aa)).

The protein belongs to the helicase family. SKI2 subfamily.

The protein localises to the nucleus. The chain is mRNA transport homolog 4 (mtr-4) from Caenorhabditis elegans.